A 42-amino-acid chain; its full sequence is Photosystem I reaction center subunit IX (42 aa).

Residues 7-27 (YLSTAPVLAAIWFAILAGLLI) traverse the membrane as a helical segment.

This sequence belongs to the PsaJ family.

It localises to the plastid. Its subcellular location is the chloroplast thylakoid membrane. Functionally, may help in the organization of the PsaE and PsaF subunits. The sequence is that of Photosystem I reaction center subunit IX from Zygnema circumcarinatum (Green alga).